We begin with the raw amino-acid sequence, 225 residues long: NAD(P)H-quinone oxidoreductase subunit K, chloroplastic (225 aa).

[4Fe-4S] cluster contacts are provided by cysteine 43, cysteine 44, cysteine 108, and cysteine 139.

The protein belongs to the complex I 20 kDa subunit family. NDH is composed of at least 16 different subunits, 5 of which are encoded in the nucleus. [4Fe-4S] cluster is required as a cofactor.

Its subcellular location is the plastid. The protein resides in the chloroplast thylakoid membrane. It catalyses the reaction a plastoquinone + NADH + (n+1) H(+)(in) = a plastoquinol + NAD(+) + n H(+)(out). The enzyme catalyses a plastoquinone + NADPH + (n+1) H(+)(in) = a plastoquinol + NADP(+) + n H(+)(out). NDH shuttles electrons from NAD(P)H:plastoquinone, via FMN and iron-sulfur (Fe-S) centers, to quinones in the photosynthetic chain and possibly in a chloroplast respiratory chain. The immediate electron acceptor for the enzyme in this species is believed to be plastoquinone. Couples the redox reaction to proton translocation, and thus conserves the redox energy in a proton gradient. The sequence is that of NAD(P)H-quinone oxidoreductase subunit K, chloroplastic from Daucus carota (Wild carrot).